A 111-amino-acid chain; its full sequence is Heavy metal-associated isoprenylated plant protein 10 (111 aa).

The region spanning 1–68 (MQETVVFEWG…ICDYVDITAV (68 aa)) is the HMA domain. Residues 68–111 (VGPEGQPAQNRNPVKKPEPKVIRGRPYPPQKKTPGKNSDECIIL) are disordered. Cysteine methyl ester is present on Cys108. Cys108 carries the S-farnesyl cysteine lipid modification. The propeptide at 109 to 111 (IIL) is removed in mature form.

This sequence belongs to the HIPP family.

Its function is as follows. Probable heavy-metal-binding protein. In Arabidopsis thaliana (Mouse-ear cress), this protein is Heavy metal-associated isoprenylated plant protein 10.